The chain runs to 583 residues: CTP synthase (583 aa).

Positions 1–278 are amidoligase domain; sequence MRRHPQTATK…DAFVVRRLNL (278 aa). Position 20 (Ser-20) interacts with CTP. Ser-20 provides a ligand contact to UTP. Residues 21–26 and Asp-78 contribute to the ATP site; that span reads SLGKGL. The Mg(2+) site is built by Asp-78 and Glu-152. Residues 159 to 161, 199 to 204, and Lys-235 each bind CTP; these read DIE and KTKPTQ. Residues 199–204 and Lys-235 each bind UTP; that span reads KTKPTQ. In terms of domain architecture, Glutamine amidotransferase type-1 spans 303-551; that stretch reads RIALVGKYVE…VKAAIDYKEG (249 aa). Gly-366 is an L-glutamine binding site. Catalysis depends on Cys-393, which acts as the Nucleophile; for glutamine hydrolysis. L-glutamine-binding positions include 394–397, Glu-416, and Arg-477; that span reads LGLQ. Catalysis depends on residues His-524 and Glu-526. The disordered stretch occupies residues 559–583; the sequence is PERVSNGAERRDQVGQSIPEPANRG.

This sequence belongs to the CTP synthase family. As to quaternary structure, homotetramer.

It carries out the reaction UTP + L-glutamine + ATP + H2O = CTP + L-glutamate + ADP + phosphate + 2 H(+). The enzyme catalyses L-glutamine + H2O = L-glutamate + NH4(+). It catalyses the reaction UTP + NH4(+) + ATP = CTP + ADP + phosphate + 2 H(+). Its pathway is pyrimidine metabolism; CTP biosynthesis via de novo pathway; CTP from UDP: step 2/2. Its activity is regulated as follows. Allosterically activated by GTP, when glutamine is the substrate; GTP has no effect on the reaction when ammonia is the substrate. The allosteric effector GTP functions by stabilizing the protein conformation that binds the tetrahedral intermediate(s) formed during glutamine hydrolysis. Inhibited by the product CTP, via allosteric rather than competitive inhibition. In terms of biological role, catalyzes the ATP-dependent amination of UTP to CTP with either L-glutamine or ammonia as the source of nitrogen. Regulates intracellular CTP levels through interactions with the four ribonucleotide triphosphates. In Mycobacterium marinum (strain ATCC BAA-535 / M), this protein is CTP synthase.